Here is a 21-residue protein sequence, read N- to C-terminus: GLLASLGKVFGGYLAEKLKPK.

As to expression, expressed by the skin dorsal glands.

It is found in the secreted. In terms of biological role, has no antimicrobial activity. Strongly inhibits the formation of NO by neuronal nitric oxide synthase at micromolar concentrations. In Ranoidea dahlii (Dahl's aquatic frog), this protein is Dahlein-5.6.